The sequence spans 555 residues: Dynein regulatory complex protein 11 (555 aa).

IQ domains follow at residues 154–183 (EDEA…TKRQ) and 199–226 (HEEA…ADKE). Disordered stretches follow at residues 232–255 (MKPK…MRRK), 299–377 (KRNP…EQKI), 450–469 (AAKL…EPFS), and 501–555 (AKKD…SCGA). 2 stretches are compositionally biased toward basic and acidic residues: residues 235–244 (KPRDPKRDPQ) and 338–367 (GDGK…KGGG). Over residues 452–464 (KLGKKGKKKKGKK) the composition is skewed to basic residues. Residues 501–521 (AKKDEKDAAGDGKGKGKDGKG) are compositionally biased toward basic and acidic residues. The segment covering 537 to 546 (KKKKGGKKKS) has biased composition (basic residues).

Belongs to the AAA ATPase family. DRC11 subfamily. In terms of assembly, component of the nexin-dynein regulatory complex (N-DRC). Interacts with DRC5.

The protein resides in the cytoplasm. It is found in the cytoskeleton. It localises to the flagellum axoneme. Component of the nexin-dynein regulatory complex (N-DRC), a key regulator of ciliary/flagellar motility which maintains the alignment and integrity of the distal axoneme and regulates microtubule sliding in motile axonemes. This is Dynein regulatory complex protein 11 from Chlamydomonas reinhardtii (Chlamydomonas smithii).